Reading from the N-terminus, the 309-residue chain is Ribosomal RNA small subunit methyltransferase H (309 aa).

Residues 32 to 34 (AGH), Asp52, Phe79, Asp100, and Gln107 each bind S-adenosyl-L-methionine.

The protein belongs to the methyltransferase superfamily. RsmH family.

It is found in the cytoplasm. It carries out the reaction cytidine(1402) in 16S rRNA + S-adenosyl-L-methionine = N(4)-methylcytidine(1402) in 16S rRNA + S-adenosyl-L-homocysteine + H(+). Its function is as follows. Specifically methylates the N4 position of cytidine in position 1402 (C1402) of 16S rRNA. This chain is Ribosomal RNA small subunit methyltransferase H, found in Mycoplasma capricolum subsp. capricolum (strain California kid / ATCC 27343 / NCTC 10154).